The primary structure comprises 197 residues: Recombination protein RecR (197 aa).

The segment at 57 to 72 (CSTCFGITESDPCHLC) adopts a C4-type zinc-finger fold. Residues 79-174 (ASICVVEEPQ…KVTRLAHGIP (96 aa)) enclose the Toprim domain.

It belongs to the RecR family.

May play a role in DNA repair. It seems to be involved in an RecBC-independent recombinational process of DNA repair. It may act with RecF and RecO. The polypeptide is Recombination protein RecR (Geotalea uraniireducens (strain Rf4) (Geobacter uraniireducens)).